A 350-amino-acid chain; its full sequence is Heat-inducible transcription repressor HrcA (350 aa).

Belongs to the HrcA family.

Functionally, negative regulator of class I heat shock genes (grpE-dnaK-dnaJ and groELS operons). Prevents heat-shock induction of these operons. The polypeptide is Heat-inducible transcription repressor HrcA (Limosilactobacillus reuteri (strain DSM 20016) (Lactobacillus reuteri)).